Here is a 362-residue protein sequence, read N- to C-terminus: MFKKHTISLLIIFLLASAVLAKPIEAHTVSPVNPNAQQTTKTVMNWLAHLPNRTENRVLSGAFGGYSHDTFSMAEADRIRSATGQSPAIYGCDYARGWLETANIEDSIDVSCNGDLMSYWKNGGIPQISLHLANPAFQSGHFKTPITNDQYKKILDSSTVEGKRLNAMLSKIADGLQELENQGVPVLFRPLHEMNGEWFWWGLTSYNQKDNERISLYKQLYKKIYHYMTDTRGLDHLIWVYSPDANRDFKTDFYPGASYVDIVGLDAYFQDAYSINGYDQLTALNKPFAFTEVGPQTANGSFDYSLFINAIKQKYPKTIYFLAWNDEWSAAVNKGASALYHDSWTLNKGEIWNGDSLTPIVE.

Positions 1-26 (MFKKHTISLLIIFLLASAVLAKPIEA) are cleaved as a signal peptide. Residues 38 to 349 (QTTKTVMNWL…YHDSWTLNKG (312 aa)) enclose the GH26 domain. Substrate is bound at residue His-131. The active-site Proton donor is the Glu-193. 2 residues coordinate substrate: Trp-198 and Tyr-268. Glu-292 (nucleophile) is an active-site residue. 324–325 (WN) lines the substrate pocket.

Belongs to the glycosyl hydrolase 26 family. In terms of assembly, homodimer.

It localises to the secreted. It carries out the reaction Random hydrolysis of (1-&gt;4)-beta-D-mannosidic linkages in mannans, galactomannans and glucomannans.. In terms of biological role, involved in the degradation of glucomannan. Catalyzes the endo hydrolysis of beta-1,4-linked mannan, galactomannan and glucomannan. In Bacillus subtilis (strain 168), this protein is Mannan endo-1,4-beta-mannosidase.